A 160-amino-acid polypeptide reads, in one-letter code: S-ribosylhomocysteine lyase (160 aa).

Fe cation-binding residues include H57, H61, and C127.

This sequence belongs to the LuxS family. In terms of assembly, homodimer. Fe cation serves as cofactor.

The enzyme catalyses S-(5-deoxy-D-ribos-5-yl)-L-homocysteine = (S)-4,5-dihydroxypentane-2,3-dione + L-homocysteine. In terms of biological role, involved in the synthesis of autoinducer 2 (AI-2) which is secreted by bacteria and is used to communicate both the cell density and the metabolic potential of the environment. The regulation of gene expression in response to changes in cell density is called quorum sensing. Catalyzes the transformation of S-ribosylhomocysteine (RHC) to homocysteine (HC) and 4,5-dihydroxy-2,3-pentadione (DPD). In Streptococcus thermophilus (strain CNRZ 1066), this protein is S-ribosylhomocysteine lyase.